The primary structure comprises 349 residues: 6-phosphogluconolactonase (349 aa).

The interval 125-151 is disordered; it reads LQSPVSEAAHTGKGPHERQEKPHTHYA. A compositionally biased stretch (basic and acidic residues) spans 138-147; it reads GPHERQEKPH.

This sequence belongs to the cycloisomerase 2 family.

It carries out the reaction 6-phospho-D-glucono-1,5-lactone + H2O = 6-phospho-D-gluconate + H(+). It functions in the pathway carbohydrate degradation; pentose phosphate pathway; D-ribulose 5-phosphate from D-glucose 6-phosphate (oxidative stage): step 2/3. Catalyzes the hydrolysis of 6-phosphogluconolactone to 6-phosphogluconate. The protein is 6-phosphogluconolactonase (pgl) of Bacillus subtilis (strain 168).